We begin with the raw amino-acid sequence, 310 residues long: Ceramide synthase LOH1 (310 aa).

A run of 6 helical transmembrane segments spans residues 16–36 (SFPTYQDLGFLPLFAVFFPTI), 85–105 (CIYYLSAELLALSVTYNEPWF), 131–151 (FLYMFAAGFYTYSIFALVFWE), 157–177 (FGVSMGHHITTLVLIVLSYIC), 216–236 (FVLFALSWVVLRLIYYPFWIL), and 260–280 (YMFNTLLYFLLVLHIFWWVLI). Residues 76–289 (RKFKESAWKC…IYRMLVKQVQ (214 aa)) enclose the TLC domain. Residues S300 and S302 each carry the phosphoserine modification.

In terms of tissue distribution, expressed ubiquitously at high levels. Not observed in pollen.

The protein resides in the endoplasmic reticulum membrane. The catalysed reaction is (4R)-hydroxysphinganine + a fatty acyl-CoA = an N-acyl-(4R)-4-hydroxysphinganine + CoA + H(+). It catalyses the reaction hexacosanoyl-CoA + (4R)-hydroxysphinganine = N-hexacosanoyl-(4R)-hydroxysphinganine + CoA + H(+). The enzyme catalyses tetracosanoyl-CoA + (4R)-hydroxysphinganine = N-tetracosanoyl-(4R)-hydroxysphinganine + CoA + H(+). It functions in the pathway sphingolipid metabolism. With respect to regulation, inhibited by the mycotoxin fumonisin B(1), a sphingosine analog mycotoxins produced by pathogenic fungi. Repressed by divalent cation such as magnesium Mg(2+), copper Cu(2+), zinc Zn(2+), manganese Mn(2+), calcium Ca(2+) and cobalt Co(2+). Essential for plant growth, promotes cell division in root meristems. Catalyzes the biosynthesis of ceramide sphingolipids with C(16) to C(28) fatty acids, structural membrane lipids involved in membrane trafficking (e.g. early endosomes) and cell polarity (e.g. polar auxin transport related proteins); mostly active with t18:0 and saturated very long saturated fatty acids (C24:0 and C26:0), such as long-chain base (LCB) phytosphingosine (t18:0), lignoceroyl- and hexacosanoyl-CoAs. Mediates resistance to sphinganine-analog mycotoxins (SAMs, e.g. fumonisin B(1)) by restoring the sphingolipid biosynthesis. Could salvage the transport of GPI-anchored proteins from the endoplasmic reticulum to the Golgi apparatus in ceramides-depleted cells after SAM exposure. May prevent precocious cell death by delaying PR1 accumulation during aging. Contributes to hypoxic conditions tolerance (e.g. submergences), especially in the dark, by promoting the formation of very-long-chain (VLC) ceramide species (22:1, 24:1 and 26:1) and of VLC unsaturated ceramides, which are modulating CTR1-mediated ethylene signaling leading to endoplasmic reticulum (ER)-to-nucleus translocation of EIN2 and EIN3. The chain is Ceramide synthase LOH1 from Arabidopsis thaliana (Mouse-ear cress).